Here is a 348-residue protein sequence, read N- to C-terminus: F(420)H(2) dehydrogenase subunit H (348 aa).

Helical transmembrane passes span 20–40 (GVVG…AVWL), 93–113 (IFMM…AVFI), 127–147 (ISVL…FMIA), 172–192 (PLGI…IVEI), 198–218 (LLWN…ALMA), 259–279 (ILGS…PAFV), 286–306 (GLIA…MTII), and 328–348 (LLPL…YLGA).

Belongs to the complex I subunit 1 family. The FPO complex is composed of at least 13 different subunits. FpoA, FpoH, FpoJ, FpoK, FpoL, FpoM and FpoN proteins constitute the membrane sector of the complex.

It localises to the cell membrane. The enzyme catalyses methanophenazine + reduced coenzyme F420-(gamma-L-Glu)(n) = dihydromethanophenazine + oxidized coenzyme F420-(gamma-L-Glu)(n) + H(+). Component of the F(420)H(2) dehydrogenase (FPO complex) which is part of the energy-conserving F(420)H(2):heterodisulfide oxidoreductase system. The membrane-bound electron transfer system of the complex plays an important role in the metabolism of methylotrophic methanogens when the organisms grow on methanol or methylamines. Catalyzes the oxidation of methanophenazine to dihydromethanophenazine. It shuttles electrons from F(420)H(2), via FAD and iron-sulfur (Fe-S) centers, to methanophenazine (an electron carrier in the membrane). It couples the redox reaction to proton translocation (for every two electrons transferred, two hydrogen ions are translocated across the cytoplasmic membrane), and thus conserves the redox energy in a proton gradient. In Methanosarcina acetivorans (strain ATCC 35395 / DSM 2834 / JCM 12185 / C2A), this protein is F(420)H(2) dehydrogenase subunit H.